The chain runs to 573 residues: E3 ubiquitin-protein ligase TRIM23 (573 aa).

The RING-type; degenerate zinc-finger motif lies at 31-76 (CGVCEDVFSLQGDKVPRLLLCGHTVCHDCLTRLPLHGRAIRCPFDR). The B box-type; degenerate zinc-finger motif lies at 122–168 (ESIIRCDEDEAHVASVYCTVCATHLCSECSQVTHSTKTLAKHRRVPL). Residues 351 to 378 (RVVLAKQEITRLLETLQKQQQQFTEVAD) are a coiled coil. Positions 390-573 (FTKDNRVYHG…LVAAGVLDVA (184 aa)) are ARF-like. GTP contacts are provided by residues 411–418 (LDGAGKTT), 454–458 (VGGKH), and 513–516 (KQDV).

In the C-terminal section; belongs to the small GTPase superfamily. Arf family. As to quaternary structure, homodimer. Interacts with PSCD1. Interacts with UBE2D2. Interacts with TBK1 (via N-terminal kinase domain) and p62/SQSTM1.

It is found in the cytoplasm. Its subcellular location is the endomembrane system. The protein localises to the golgi apparatus membrane. It localises to the lysosome membrane. The catalysed reaction is S-ubiquitinyl-[E2 ubiquitin-conjugating enzyme]-L-cysteine + [acceptor protein]-L-lysine = [E2 ubiquitin-conjugating enzyme]-L-cysteine + N(6)-ubiquitinyl-[acceptor protein]-L-lysine.. The protein operates within protein modification; protein ubiquitination. Functionally, acts as an E3 ubiquitin-protein ligase. Plays an essential role in autophagy activation during viral infection. Mechanistically, activates TANK-binding kinase 1/TBK1 by facilitating its dimerization and ability to phosphorylate the selective autophagy receptor SQSTM1. In order to achieve this function, TRIM23 mediates 'Lys-27'-linked auto-ubiquitination of its ADP-ribosylation factor (ARF) domain to induce its GTPase activity and its recruitment to autophagosomes. This is E3 ubiquitin-protein ligase TRIM23 (Trim23) from Rattus norvegicus (Rat).